A 228-amino-acid chain; its full sequence is Chaperone protein FanE (228 aa).

An N-terminal signal peptide occupies residues methionine 1 to alanine 19. Cysteine 157 and cysteine 198 are disulfide-bonded.

It belongs to the periplasmic pilus chaperone family.

It is found in the periplasm. Functionally, mediates assembly of pili by forming soluble multimeric complexes with pili subunits as an intermediate step in the assembly process. This protein is involved in K99 pili assembly. The protein is Chaperone protein FanE (fanE) of Escherichia coli.